Consider the following 50-residue polypeptide: Ampulexin 2 (50 aa).

Residues 1 to 26 (MKAIMVLFYVMTLTIIGSFSMVSGSP) form the signal peptide.

Dimer; disulfide-linked. In terms of tissue distribution, expressed in venom sac and, to a lesser extent, in venom gland. Not expressed in brain.

It localises to the secreted. Its function is as follows. Amphipathic peptide which probably adopts an alpha-helical structure. Has no antimicrobial activity against E.coli DH5alpha or B.thuringiensis. Is not cytotoxic in vitro. In Ampulex compressa (Emerald cockroach wasp), this protein is Ampulexin 2.